A 704-amino-acid chain; its full sequence is Ion-translocating oxidoreductase complex subunit C (704 aa).

2 consecutive 4Fe-4S ferredoxin-type domains span residues 368-397 and 407-436; these read MGAP…QQLY and KATA…VQYF. [4Fe-4S] cluster contacts are provided by cysteine 377, cysteine 380, cysteine 383, cysteine 387, cysteine 416, cysteine 419, cysteine 422, and cysteine 426. Residues 535–684 form a disordered region; sequence ARAKQAAHPM…PADPRKAAVA (150 aa). The span at 556-565 shows a compositional bias: low complexity; the sequence is KAAVEAAIAR.

This sequence belongs to the 4Fe4S bacterial-type ferredoxin family. RnfC subfamily. In terms of assembly, the complex is composed of six subunits: RsxA, RsxB, RsxC, RsxD, RsxE and RsxG. It depends on [4Fe-4S] cluster as a cofactor.

Its subcellular location is the cell inner membrane. Its function is as follows. Part of a membrane-bound complex that couples electron transfer with translocation of ions across the membrane. Required to maintain the reduced state of SoxR. The chain is Ion-translocating oxidoreductase complex subunit C from Salmonella paratyphi C (strain RKS4594).